The following is a 175-amino-acid chain: Adenine phosphoribosyltransferase (175 aa).

Belongs to the purine/pyrimidine phosphoribosyltransferase family. As to quaternary structure, homodimer.

Its subcellular location is the cytoplasm. The enzyme catalyses AMP + diphosphate = 5-phospho-alpha-D-ribose 1-diphosphate + adenine. It functions in the pathway purine metabolism; AMP biosynthesis via salvage pathway; AMP from adenine: step 1/1. In terms of biological role, catalyzes a salvage reaction resulting in the formation of AMP, that is energically less costly than de novo synthesis. This Lacticaseibacillus paracasei (strain ATCC 334 / BCRC 17002 / CCUG 31169 / CIP 107868 / KCTC 3260 / NRRL B-441) (Lactobacillus paracasei) protein is Adenine phosphoribosyltransferase.